The chain runs to 307 residues: Methionyl-tRNA formyltransferase (307 aa).

(6S)-5,6,7,8-tetrahydrofolate is bound at residue 109–112; that stretch reads SMLP.

This sequence belongs to the Fmt family.

The enzyme catalyses L-methionyl-tRNA(fMet) + (6R)-10-formyltetrahydrofolate = N-formyl-L-methionyl-tRNA(fMet) + (6S)-5,6,7,8-tetrahydrofolate + H(+). Functionally, attaches a formyl group to the free amino group of methionyl-tRNA(fMet). The formyl group appears to play a dual role in the initiator identity of N-formylmethionyl-tRNA by promoting its recognition by IF2 and preventing the misappropriation of this tRNA by the elongation apparatus. The sequence is that of Methionyl-tRNA formyltransferase from Orientia tsutsugamushi (strain Boryong) (Rickettsia tsutsugamushi).